We begin with the raw amino-acid sequence, 71 residues long: DNA-directed RNA polymerases II, IV and V subunit 10 (71 aa).

Zn(2+) contacts are provided by C7, C10, C44, and C45.

The protein belongs to the archaeal Rpo10/eukaryotic RPB10 RNA polymerase subunit family. In terms of assembly, component of the RNA polymerase II, IV and V complexes. Interacts with NRPD1.

The protein resides in the nucleus. DNA-dependent RNA polymerase catalyzes the transcription of DNA into RNA using the four ribonucleoside triphosphates as substrates. Component of RNA polymerase II which synthesizes mRNA precursors and many functional non-coding RNAs. Pol II is the central component of the basal RNA polymerase II transcription machinery. It is composed of mobile elements that move relative to each other. Component of RNA polymerases IV and V which mediate short-interfering RNAs (siRNA) accumulation and subsequent RNA-directed DNA methylation-dependent (RdDM) transcriptional gene silencing (TGS) of endogenous repeated sequences, including transposable elements. This chain is DNA-directed RNA polymerases II, IV and V subunit 10 (NRPB10), found in Arabidopsis thaliana (Mouse-ear cress).